Here is a 393-residue protein sequence, read N- to C-terminus: Small ribosomal subunit protein bS1 (393 aa).

S1 motif domains follow at residues G16–R90, N108–K173, G194–K262, and G279–K348. The segment covering V356 to D369 has biased composition (polar residues). The tract at residues V356–G381 is disordered.

This sequence belongs to the bacterial ribosomal protein bS1 family.

Its function is as follows. Binds mRNA; thus facilitating recognition of the initiation point. It is needed to translate mRNA with a short Shine-Dalgarno (SD) purine-rich sequence. The sequence is that of Small ribosomal subunit protein bS1 (rpsA) from Staphylococcus saprophyticus subsp. saprophyticus (strain ATCC 15305 / DSM 20229 / NCIMB 8711 / NCTC 7292 / S-41).